Consider the following 83-residue polypeptide: Exodeoxyribonuclease 7 small subunit (83 aa).

Belongs to the XseB family. As to quaternary structure, heterooligomer composed of large and small subunits.

The protein resides in the cytoplasm. It catalyses the reaction Exonucleolytic cleavage in either 5'- to 3'- or 3'- to 5'-direction to yield nucleoside 5'-phosphates.. In terms of biological role, bidirectionally degrades single-stranded DNA into large acid-insoluble oligonucleotides, which are then degraded further into small acid-soluble oligonucleotides. In Brucella melitensis biotype 1 (strain ATCC 23456 / CCUG 17765 / NCTC 10094 / 16M), this protein is Exodeoxyribonuclease 7 small subunit.